A 1225-amino-acid polypeptide reads, in one-letter code: Structural maintenance of chromosomes protein 1 (1225 aa).

33-40 contributes to the ATP binding site; the sequence is GPNGSGKS. Residues 173–489 are a coiled coil; the sequence is SGSIQYKKEY…SANNQEYDLN (317 aa). Positions 527–641 constitute an SMC hinge domain; the sequence is PGVKGLVHDL…CNTLNIAKDL (115 aa). Residues 679-1063 adopt a coiled-coil conformation; it reads KEEYQSLMSL…LKIKKKRKEL (385 aa). The Nuclear localization signal motif lies at 1057-1061; the sequence is KKKRK.

It belongs to the SMC family. SMC1 subfamily. In terms of assembly, cohesin complexes are composed of the SMC1 and SMC3 heterodimer attached via their SMC hinge domain, MCD1/SCC1 which link them, and IRR1/SCC3, which interacts with MCD1. The cohesin complex also interacts with SCC2, which is required for its association with chromosomes.

It is found in the nucleus. The protein resides in the chromosome. In terms of biological role, involved in chromosome cohesion during cell cycle and in DNA repair. Central component of cohesin complex. The cohesin complex is required for the cohesion of sister chromatids after DNA replication. The cohesin complex apparently forms a large proteinaceous ring within which sister chromatids can be trapped. At anaphase, the complex is cleaved and dissociates from chromatin, allowing sister chromatids to segregate. This Saccharomyces cerevisiae (strain ATCC 204508 / S288c) (Baker's yeast) protein is Structural maintenance of chromosomes protein 1 (SMC1).